A 340-amino-acid polypeptide reads, in one-letter code: S-adenosylmethionine:tRNA ribosyltransferase-isomerase (340 aa).

Belongs to the QueA family. In terms of assembly, monomer.

The protein resides in the cytoplasm. The catalysed reaction is 7-aminomethyl-7-carbaguanosine(34) in tRNA + S-adenosyl-L-methionine = epoxyqueuosine(34) in tRNA + adenine + L-methionine + 2 H(+). Its pathway is tRNA modification; tRNA-queuosine biosynthesis. Functionally, transfers and isomerizes the ribose moiety from AdoMet to the 7-aminomethyl group of 7-deazaguanine (preQ1-tRNA) to give epoxyqueuosine (oQ-tRNA). In Chlorobaculum parvum (strain DSM 263 / NCIMB 8327) (Chlorobium vibrioforme subsp. thiosulfatophilum), this protein is S-adenosylmethionine:tRNA ribosyltransferase-isomerase.